The primary structure comprises 274 residues: Mitochondrial outer membrane protein porin 1 (274 aa).

The protein belongs to the eukaryotic mitochondrial porin (TC 1.B.8.1) family. In terms of tissue distribution, expressed in shoots and roots. Also expressed in callus, leaves, panicles, sheaths and stems.

Its subcellular location is the mitochondrion outer membrane. Functionally, forms a channel through the mitochondrial outer membrane that allows diffusion of small hydrophilic molecules. The channel adopts an open conformation at low or zero membrane potential and a closed conformation at potentials above 30-40 mV. The open state has a weak anion selectivity whereas the closed state is cation-selective. The polypeptide is Mitochondrial outer membrane protein porin 1 (VDAC1) (Oryza sativa subsp. japonica (Rice)).